The primary structure comprises 423 residues: Protein CLP1 homolog (423 aa).

ATP contacts are provided by residues E19, K60, and 122 to 127; that span reads DVGKTT.

The protein belongs to the Clp1 family. Clp1 subfamily.

The protein localises to the nucleus. In terms of biological role, required for endonucleolytic cleavage during polyadenylation-dependent pre-mRNA 3'-end formation. The chain is Protein CLP1 homolog (cbc) from Anopheles gambiae (African malaria mosquito).